We begin with the raw amino-acid sequence, 138 residues long: Cysteine desulfuration protein SufE (138 aa).

Cys-51 acts as the Cysteine persulfide intermediate in catalysis.

Belongs to the SufE family. Homodimer. Interacts with SufS.

The protein resides in the cytoplasm. The protein operates within cofactor biosynthesis; iron-sulfur cluster biosynthesis. In terms of biological role, participates in cysteine desulfuration mediated by SufS. Cysteine desulfuration mobilizes sulfur from L-cysteine to yield L-alanine and constitutes an essential step in sulfur metabolism for biosynthesis of a variety of sulfur-containing biomolecules. Functions as a sulfur acceptor for SufS, by mediating the direct transfer of the sulfur atom from the S-sulfanylcysteine of SufS, an intermediate product of cysteine desulfuration process. The sequence is that of Cysteine desulfuration protein SufE from Sodalis glossinidius (strain morsitans).